Here is a 526-residue protein sequence, read N- to C-terminus: Peptide chain release factor 3 (526 aa).

The tr-type G domain maps to 9–277 (DKRRTFAIIS…GIVEWAPKPL (269 aa)). GTP contacts are provided by residues 18–25 (SHPDAGKT), 86–90 (DTPGH), and 140–143 (NKLD).

Belongs to the TRAFAC class translation factor GTPase superfamily. Classic translation factor GTPase family. PrfC subfamily.

The protein resides in the cytoplasm. In terms of biological role, increases the formation of ribosomal termination complexes and stimulates activities of RF-1 and RF-2. It binds guanine nucleotides and has strong preference for UGA stop codons. It may interact directly with the ribosome. The stimulation of RF-1 and RF-2 is significantly reduced by GTP and GDP, but not by GMP. This Shewanella sp. (strain MR-4) protein is Peptide chain release factor 3.